Here is a 424-residue protein sequence, read N- to C-terminus: Gamma-glutamyl phosphate reductase (424 aa).

This sequence belongs to the gamma-glutamyl phosphate reductase family.

It localises to the cytoplasm. It catalyses the reaction L-glutamate 5-semialdehyde + phosphate + NADP(+) = L-glutamyl 5-phosphate + NADPH + H(+). Its pathway is amino-acid biosynthesis; L-proline biosynthesis; L-glutamate 5-semialdehyde from L-glutamate: step 2/2. In terms of biological role, catalyzes the NADPH-dependent reduction of L-glutamate 5-phosphate into L-glutamate 5-semialdehyde and phosphate. The product spontaneously undergoes cyclization to form 1-pyrroline-5-carboxylate. This is Gamma-glutamyl phosphate reductase from Parvibaculum lavamentivorans (strain DS-1 / DSM 13023 / NCIMB 13966).